Here is a 197-residue protein sequence, read N- to C-terminus: uncharacterized protein (197 aa).

This is an uncharacterized protein from Acanthamoeba polyphaga (Amoeba).